Here is a 263-residue protein sequence, read N- to C-terminus: Acyl-[acyl-carrier-protein]--UDP-N-acetylglucosamine O-acyltransferase (263 aa).

The protein belongs to the transferase hexapeptide repeat family. LpxA subfamily. As to quaternary structure, homotrimer.

It localises to the cytoplasm. The catalysed reaction is a (3R)-hydroxyacyl-[ACP] + UDP-N-acetyl-alpha-D-glucosamine = a UDP-3-O-[(3R)-3-hydroxyacyl]-N-acetyl-alpha-D-glucosamine + holo-[ACP]. Its pathway is glycolipid biosynthesis; lipid IV(A) biosynthesis; lipid IV(A) from (3R)-3-hydroxytetradecanoyl-[acyl-carrier-protein] and UDP-N-acetyl-alpha-D-glucosamine: step 1/6. Involved in the biosynthesis of lipid A, a phosphorylated glycolipid that anchors the lipopolysaccharide to the outer membrane of the cell. This is Acyl-[acyl-carrier-protein]--UDP-N-acetylglucosamine O-acyltransferase from Xanthomonas oryzae pv. oryzae (strain PXO99A).